The chain runs to 248 residues: DNA repair protein RecO (248 aa).

The protein belongs to the RecO family.

Its function is as follows. Involved in DNA repair and RecF pathway recombination. The chain is DNA repair protein RecO from Rubrobacter xylanophilus (strain DSM 9941 / JCM 11954 / NBRC 16129 / PRD-1).